We begin with the raw amino-acid sequence, 75 residues long: Veswaprin-b (75 aa).

The first 24 residues, 1 to 24 (MSSGGLLLLLGLLTLWAELTPISG), serve as a signal peptide directing secretion. The interval 23–42 (SGQDRPKKPGLRPPRPQKPP) is disordered. Positions 27 to 72 (RPKKPGLRPPRPQKPPCVRECKNDWRCPGEQKCCRYGCIYECRDPI) constitute a WAP; atypical domain. Disulfide bonds link Cys43/Cys64, Cys47/Cys59, and Cys53/Cys68.

The protein belongs to the venom waprin family. Expressed by the venom gland.

The protein resides in the secreted. Functionally, damages membranes of susceptible bacteria. Has no hemolytic activity. Not toxic to mice. Does not inhibit the proteinases elastase and cathepsin G. The polypeptide is Veswaprin-b (Demansia vestigiata (Lesser black whip snake)).